Consider the following 377-residue polypeptide: Deoxyribonuclease CdiA-o11 (377 aa).

Residues 81-84 carry the VENN CT cleavage motif motif; sequence VENN. The interval 85–233 is inner membrane translocation domain (IMTD), targets to YciB; the sequence is YLSTNQSLTF…ISFMSRNTAT (149 aa). Residues 88-377 form a CT domain, sufficient to interact with CdiI region; the sequence is TNQSLTFDKE…GVKVTVTQVK (290 aa). Residues 222–377 are has DNase activity in vivo, cannot be expressed in the absence of CdiI; sequence AAISFMSRNT…GVKVTVTQVK (156 aa). Residues Glu-257, Asp-278, Ser-289, and Lys-291 contribute to the active site. Zn(2+)-binding residues include Glu-257 and Asp-278.

As to quaternary structure, interacts with cognate immunity protein CdiI-o11-EC869, which blocks its toxic DNase activity. Requires Zn(2+) as cofactor.

It is found in the target cell. The protein resides in the target cell cytoplasm. Toxic component of a toxin-immunity protein module, which functions as a cellular contact-dependent growth inhibition (CDI) system. CDI modules allow bacteria to communicate with and inhibit the growth of closely related neighboring bacteria in a contact-dependent fashion. The C-terminal 289 residues (the CT fragment) has a strong DNase activity in the presence of Zn(2+), completely degrading supercoiled and linear plasmids, and inhibits growth. In the presence of Mg(2+) it nicks dsDNA. Toxic activity is neutralized by coexpression of the cognate immunity protein CdiI-o11-EC869, but not by non-cognate immunity proteins from other toxin-immunity modules or other strains of E.coli. Gains access to the cytoplasm of target cells by using integral inner membrane protein YciB. Its function is as follows. Expression of this locus confers protection against other bacteria carrying the locus. The sequence is that of Deoxyribonuclease CdiA-o11 (cdiA4) from Escherichia coli O157:H7 (strain EC869).